The following is a 449-amino-acid chain: Kynurenine 3-monooxygenase (449 aa).

This sequence belongs to the aromatic-ring hydroxylase family. KMO subfamily. It depends on FAD as a cofactor.

It catalyses the reaction L-kynurenine + NADPH + O2 + H(+) = 3-hydroxy-L-kynurenine + NADP(+) + H2O. It participates in cofactor biosynthesis; NAD(+) biosynthesis; quinolinate from L-kynurenine: step 1/3. In terms of biological role, catalyzes the hydroxylation of L-kynurenine (L-Kyn) to form 3-hydroxy-L-kynurenine (L-3OHKyn). Required for synthesis of quinolinic acid. The sequence is that of Kynurenine 3-monooxygenase from Cytophaga hutchinsonii (strain ATCC 33406 / DSM 1761 / CIP 103989 / NBRC 15051 / NCIMB 9469 / D465).